A 146-amino-acid polypeptide reads, in one-letter code: DNA-directed RNA polymerase subunit beta (146 aa).

This sequence belongs to the RNA polymerase beta chain family. As to quaternary structure, the RNAP catalytic core consists of 2 alpha, 1 beta, 1 beta' and 1 omega subunit. When a sigma factor is associated with the core the holoenzyme is formed, which can initiate transcription.

It catalyses the reaction RNA(n) + a ribonucleoside 5'-triphosphate = RNA(n+1) + diphosphate. Functionally, DNA-dependent RNA polymerase catalyzes the transcription of DNA into RNA using the four ribonucleoside triphosphates as substrates. The sequence is that of DNA-directed RNA polymerase subunit beta (rpoB) from Liberibacter africanus (Citrus greening disease).